Reading from the N-terminus, the 84-residue chain is Small ribosomal subunit protein uS17 (84 aa).

It belongs to the universal ribosomal protein uS17 family. In terms of assembly, part of the 30S ribosomal subunit.

In terms of biological role, one of the primary rRNA binding proteins, it binds specifically to the 5'-end of 16S ribosomal RNA. This chain is Small ribosomal subunit protein uS17, found in Alkaliphilus metalliredigens (strain QYMF).